Reading from the N-terminus, the 597-residue chain is Miltiradiene synthase KSL2, chloroplastic (597 aa).

The N-terminal 51 residues, 1–51 (MSLAFNLRAIPFSGHTIQSRRGLFPVHESPMITTKPFVAVKCSLTTSTDLM), are a transit peptide targeting the chloroplast. The Mg(2+) site is built by Asp329, Asp333, Asn473, and Glu481. Positions 329–333 (DDFFD) match the DDXXD motif motif.

The protein belongs to the terpene synthase family. The cofactor is Mg(2+).

The protein localises to the plastid. Its subcellular location is the chloroplast. It catalyses the reaction (+)-copalyl diphosphate = miltiradiene + diphosphate. Its pathway is secondary metabolite biosynthesis; terpenoid biosynthesis. Functionally, involved in the biosynthesis of ent-kaurene diterpenoids natural products such as oridonin, miltiradiene, eriocalyxin B and nezukol, known to exhibit antitumor, anti-inflammatory and antibacterial activities. Catalyzes the conversion of (+)-copalyl diphosphate ((+)-CPP) to miltiradiene. In Isodon japonicus (Scutellaria japonica), this protein is Miltiradiene synthase KSL2, chloroplastic.